The following is a 509-amino-acid chain: Protein root UVB sensitive 5 (509 aa).

The segment at 22 to 49 (CQPKRRRVEHLRCSAQPSSIREDDEDAD) is disordered.

It belongs to the RUS1 family.

This Arabidopsis thaliana (Mouse-ear cress) protein is Protein root UVB sensitive 5.